The sequence spans 403 residues: Acetylornithine/succinyldiaminopimelate aminotransferase (403 aa).

Pyridoxal 5'-phosphate contacts are provided by residues G107 to A108 and F140. A N(2)-acetyl-L-ornithine-binding site is contributed by R143. Residue D225–Q228 coordinates pyridoxal 5'-phosphate. The residue at position 254 (K254) is an N6-(pyridoxal phosphate)lysine. A N(2)-acetyl-L-ornithine-binding site is contributed by T282. T283 contributes to the pyridoxal 5'-phosphate binding site.

This sequence belongs to the class-III pyridoxal-phosphate-dependent aminotransferase family. ArgD subfamily. As to quaternary structure, homodimer. Requires pyridoxal 5'-phosphate as cofactor.

Its subcellular location is the cytoplasm. The enzyme catalyses N(2)-acetyl-L-ornithine + 2-oxoglutarate = N-acetyl-L-glutamate 5-semialdehyde + L-glutamate. It carries out the reaction N-succinyl-(2S,6S)-2,6-diaminopimelate + 2-oxoglutarate = (S)-2-succinylamino-6-oxoheptanedioate + L-glutamate. The protein operates within amino-acid biosynthesis; L-arginine biosynthesis; N(2)-acetyl-L-ornithine from L-glutamate: step 4/4. It participates in amino-acid biosynthesis; L-lysine biosynthesis via DAP pathway; LL-2,6-diaminopimelate from (S)-tetrahydrodipicolinate (succinylase route): step 2/3. Functionally, involved in both the arginine and lysine biosynthetic pathways. This Photorhabdus laumondii subsp. laumondii (strain DSM 15139 / CIP 105565 / TT01) (Photorhabdus luminescens subsp. laumondii) protein is Acetylornithine/succinyldiaminopimelate aminotransferase.